A 293-amino-acid polypeptide reads, in one-letter code: Acetylglutamate kinase (293 aa).

Substrate is bound by residues 68–69 (GG), R90, and N189.

Belongs to the acetylglutamate kinase family. ArgB subfamily.

It localises to the cytoplasm. It catalyses the reaction N-acetyl-L-glutamate + ATP = N-acetyl-L-glutamyl 5-phosphate + ADP. The protein operates within amino-acid biosynthesis; L-arginine biosynthesis; N(2)-acetyl-L-ornithine from L-glutamate: step 2/4. Catalyzes the ATP-dependent phosphorylation of N-acetyl-L-glutamate. In Mycobacterium ulcerans (strain Agy99), this protein is Acetylglutamate kinase.